Consider the following 1060-residue polypeptide: DNA-directed RNA polymerase subunit beta (1060 aa).

It belongs to the RNA polymerase beta chain family. In terms of assembly, in plastids the minimal PEP RNA polymerase catalytic core is composed of four subunits: alpha, beta, beta', and beta''. When a (nuclear-encoded) sigma factor is associated with the core the holoenzyme is formed, which can initiate transcription.

It localises to the plastid. The protein resides in the chloroplast. The enzyme catalyses RNA(n) + a ribonucleoside 5'-triphosphate = RNA(n+1) + diphosphate. Its function is as follows. DNA-dependent RNA polymerase catalyzes the transcription of DNA into RNA using the four ribonucleoside triphosphates as substrates. The sequence is that of DNA-directed RNA polymerase subunit beta from Calycanthus floridus var. glaucus (Eastern sweetshrub).